The chain runs to 324 residues: Testisin (324 aa).

The first 21 residues, 1–21 (MGARGKTLVPLLVVVATAAMA), serve as a signal peptide directing secretion. The propeptide occupies 22–54 (LQSTYLQVDPEKPELQEPDLLSGPCGHRTIPSR). 2 cysteine pairs are disulfide-bonded: cysteine 46–cysteine 167 and cysteine 80–cysteine 96. The region spanning 55-296 (IVGGDDAELG…HYNWIQSTMI (242 aa)) is the Peptidase S1 domain. Residues histidine 95 and aspartate 147 each act as charge relay system in the active site. N-linked (GlcNAc...) asparagine glycosylation is found at asparagine 170, asparagine 177, and asparagine 210. Intrachain disulfides connect cysteine 181-cysteine 254, cysteine 214-cysteine 233, and cysteine 244-cysteine 272. Serine 248 acts as the Charge relay system in catalysis. Asparagine 283 carries an N-linked (GlcNAc...) asparagine glycan. Asparagine 298 carries GPI-anchor amidated asparagine lipidation. Positions 299-324 (GLLRPDPVPLLLFLTLAWASSLLRPA) are cleaved as a propeptide — removed in mature form.

This sequence belongs to the peptidase S1 family. As to expression, testis.

The protein localises to the cell membrane. Functionally, could regulate proteolytic events associated with testicular germ cell maturation. The sequence is that of Testisin (Prss21) from Mus musculus (Mouse).